The following is a 622-amino-acid chain: WD repeat-containing protein 70 (622 aa).

The span at 36–55 (RTAVERSKQTLEAREKEEQL) shows a compositional bias: basic and acidic residues. The disordered stretch occupies residues 36–141 (RTAVERSKQT…DNPVKDIPDS (106 aa)). Over residues 67–84 (SSSGQKKTKASGSSSGSE) the composition is skewed to low complexity. Acidic residues predominate over residues 120-132 (SDDEDDEEHEDDD). WD repeat units lie at residues 148–187 (HGTK…ASLQ), 195–236 (CECH…ECVK), 249–289 (GHTA…KHKG), 298–337 (GKPV…HTKF), 344–383 (TPGT…NPLN), 387–434 (GLEN…KIYE), and 437–476 (VTEA…QRGA). Over residues 508 to 533 (REPRQRSTRKQLEKDRLDPVKSHKPE) the composition is skewed to basic and acidic residues. Disordered regions lie at residues 508-549 (REPR…GTHG) and 602-622 (AEVD…KRKI). The segment covering 539-549 (PGRGGRVGTHG) has biased composition (gly residues). Over residues 604 to 614 (VDSDEEEPDNE) the composition is skewed to acidic residues.

This sequence belongs to the WD repeat GAD-1 family.

This chain is WD repeat-containing protein 70 (wdr70), found in Xenopus laevis (African clawed frog).